Here is a 554-residue protein sequence, read N- to C-terminus: Bifunctional epoxide hydrolase 2 (554 aa).

The interval 1–224 is phosphatase; that stretch reads MALRVAAFDL…KVTGTQFPEA (224 aa). Residues Asp9 and Asp11 each contribute to the Mg(2+) site. N6-succinyllysine is present on Lys55. 123–124 is a phosphate binding site; that stretch reads TN. Position 176 is an N6-acetyllysine; alternate (Lys176). Lys176 bears the N6-succinyllysine; alternate mark. Asp185 lines the Mg(2+) pocket. N6-acetyllysine is present on residues Lys191 and Lys215. An epoxide hydrolase region spans residues 233 to 554; the sequence is NDVSHGYVTV…IQNPSVTSKI (322 aa). The 274-residue stretch at 257 to 530 folds into the AB hydrolase-1 domain; it reads PAICLCHGFP…CGHWTQIEKP (274 aa). Asp333 serves as the catalytic Nucleophile. Residue Ser368 is modified to Phosphoserine. Residue Tyr381 coordinates substrate. Lys420 and Lys454 each carry N6-succinyllysine. Tyr465 (proton donor) is an active-site residue. Position 504 is an N6-succinyllysine (Lys504). The S-(15-deoxy-Delta12,14-prostaglandin J2-9-yl)cysteine moiety is linked to residue Cys521. His523 functions as the Proton acceptor in the catalytic mechanism. Residues 552–554 carry the Microbody targeting signal motif; that stretch reads SKI. The residue at position 553 (Lys553) is an N6-succinyllysine.

The protein belongs to the AB hydrolase superfamily. Epoxide hydrolase family. In terms of assembly, homodimer. Requires Mg(2+) as cofactor. Post-translationally, the covalent modification of cysteine by 15-deoxy-Delta12,14-prostaglandin-J2 is autocatalytic and reversible. It may occur as an alternative to other cysteine modifications, such as S-nitrosylation and S-palmitoylation.

It localises to the cytoplasm. The protein localises to the peroxisome. It catalyses the reaction an epoxide + H2O = an ethanediol. The catalysed reaction is (9S,10S)-10-hydroxy-9-(phosphooxy)octadecanoate + H2O = (9S,10S)-9,10-dihydroxyoctadecanoate + phosphate. The enzyme catalyses 8-hydroxy-(11S,12S)-epoxy-(5Z,9E,14Z)-eicosatrienoate + H2O = (8,11R,12S)-trihydroxy-(5Z,9E,14Z)-eicosatrienoate. It carries out the reaction 10-hydroxy-(11S,12S)-epoxy- (5Z,8Z,14Z)-eicosatrienoate + H2O = (10,11S,12R)-trihydroxy-(5Z,8Z,14Z)-eicosatrienoate. It catalyses the reaction 12-phosphooxy-(9Z)-octadecenoate + H2O = 12-hydroxy-(9Z)-octadecenoate + phosphate. The catalysed reaction is 12-phosphooxy-(9E)-octadecenoate + H2O = 12-hydroxy-(9E)-octadecenoate + phosphate. The enzyme catalyses 12-(phosphooxy)octadecanoate + H2O = 12-hydroxyoctadecanoate + phosphate. It carries out the reaction 8,9-epoxy-(5Z,11Z,14Z)-eicosatrienoate + H2O = 8,9-dihydroxy-(5Z,11Z,14Z)-eicosatrienoate. It catalyses the reaction 11,12-epoxy-(5Z,8Z,14Z)-eicosatrienoate + H2O = 11,12-dihydroxy-(5Z,8Z,14Z)-eicosatrienoate. The catalysed reaction is 14,15-epoxy-(5Z,8Z,11Z)-eicosatrienoate + H2O = 14,15-dihydroxy-(5Z,8Z,11Z)-eicosatrienoate. The enzyme catalyses 9,10-epoxy-(12Z)-octadecenoate + H2O = 9,10-dihydroxy-(12Z)-octadecenoate. It carries out the reaction 1-tetradecanoyl-sn-glycerol 3-phosphate + H2O = 1-tetradecanoyl-sn-glycerol + phosphate. It catalyses the reaction 1-octadecanoyl-sn-glycero-3-phosphate + H2O = 1-octadecanoyl-sn-glycerol + phosphate. The catalysed reaction is 1-(5Z,8Z,11Z,14Z-eicosatetraenoyl)-sn-glycero-3-phosphate + H2O = 1-(5Z,8Z,11Z,14Z-eicosatetraenoyl)-sn-glycerol + phosphate. The enzyme catalyses 1-hexadecanoyl-sn-glycero-3-phosphate + H2O = 1-hexadecanoyl-sn-glycerol + phosphate. It carries out the reaction 1-(9Z-octadecenoyl)-sn-glycero-3-phosphate + H2O = 1-(9Z-octadecenoyl)-sn-glycerol + phosphate. It catalyses the reaction (8S,9R)-epoxy-(5Z,11Z,14Z)-eicosatrienoate + H2O = (8S,9S)-dihydroxy-(5Z,11Z,14Z)-eicosatrienoate. The catalysed reaction is (11S,12R)-epoxy-(5Z,8Z,14Z)-eicosatrienoate + H2O = (11R,12R)-dihydroxy-(5Z,8Z,14Z)-eicosatrienoate. The enzyme catalyses (11S,12R)-epoxy-(5Z,8Z,14Z)-eicosatrienoate + H2O = (11S,12S)-dihydroxy-(5Z,8Z,14Z)-eicosatrienoate. It carries out the reaction (14S,15R)-epoxy-(5Z,8Z,11Z)-eicosatrienoate + H2O = (14R,15R)-dihydroxy-(5Z,8Z,11Z)-eicosatrienoate. It catalyses the reaction (14S,15R)-epoxy-(5Z,8Z,11Z)-eicosatrienoate + H2O = (14S,15S)-dihydroxy-(5Z,8Z,11Z)-eicosatrienoate. The catalysed reaction is (11R,12S)-epoxy-(5Z,8Z,14Z)-eicosatrienoate + H2O = (11S,12S)-dihydroxy-(5Z,8Z,14Z)-eicosatrienoate. The enzyme catalyses (11R,12S)-epoxy-(5Z,8Z,14Z)-eicosatrienoate + H2O = (11R,12R)-dihydroxy-(5Z,8Z,14Z)-eicosatrienoate. It carries out the reaction (8S,9R)-epoxy-(5Z,11Z,14Z)-eicosatrienoate + H2O = (8R,9R)-dihydroxy-(5Z,11Z,14Z)-eicosatrienoate. It catalyses the reaction (14R,15S)-epoxy-(5Z,8Z,11Z)-eicosatrienoate + H2O = (14R,15R)-dihydroxy-(5Z,8Z,11Z)-eicosatrienoate. Inhibited by 1-(1-acetylpiperidin-4-yl)-3-(4-(trifl uoromethoxy)phenyl)urea (TPAU), 1-cyclohexyl-3-dodecylurea (CDU), 12-(3-adamantan-1-yl-ureido)-dodecanoic acid (AUDA), 1-((3S, 5S, 7S)-adamantan-1-yl)-3-(5-(2-(2-ethoxyethoxy) ethoxy)pentyl)urea (AEPU), N-adamantyl-N[']-cyclohexyl urea (ACU), 4-(((1S, 4S)-4-(3-((3S, 5S, 7S)-adamantan-1-yl) ureido)cyclohexyl)oxy)benzoic acid (c-AUCB), 4-(((1R, 4R)-4-(3-((3S, 5S, 7S)-adamantan-1-yl)ureido)cyclohexyl)oxy)benzoic acid (t-AUCB), 4-(((1R, 4R)-4-(3-(4(trifluoromethoxy)phenyl)ureido)cyclohexyl)oxy)benzoic acid (t-TAUCB) and to a lesser extent by 8-(3-((3S, 5S, 7S)-adamantan-1-yl)ureido) octanoic acid (AUOA). Phosphatase activity is inhibited by dodecyl-phosphate, phospholipids such as phospho-lysophosphatidic acids and fatty acids such as palmitic acid and lauric acid. In terms of biological role, bifunctional enzyme. The C-terminal domain has epoxide hydrolase activity and acts on epoxides (alkene oxides, oxiranes) and arene oxides. Plays a role in xenobiotic metabolism by degrading potentially toxic epoxides. Also determines steady-state levels of physiological mediators. The N-terminal domain has lipid phosphatase activity, with the highest activity towards threo-9,10-phosphonooxy-hydroxy-octadecanoic acid, followed by erythro-9,10-phosphonooxy-hydroxy-octadecanoic acid, 12-phosphonooxy-octadec-9Z-enoic acid and 12-phosphonooxy-octadec-9E-enoic acid. Its function is as follows. Bifunctional enzyme. The C-terminal domain has epoxide hydrolase activity and acts on epoxides (alkene oxides, oxiranes) and arene oxides. Plays a role in xenobiotic metabolism by degrading potentially toxic epoxides. Also determines steady-state levels of physiological mediators. Bifunctional enzyme. The N-terminal domain has lipid phosphatase activity, with the highest activity towards threo-9,10-phosphonooxy-hydroxy-octadecanoic acid, followed by erythro-9,10-phosphonooxy-hydroxy-octadecanoic acid, 12-phosphonooxy-octadec-9Z-enoic acid and 12-phosphonooxy-octadec-9E-enoic acid. Has phosphatase activity toward lyso-glycerophospholipids with also some lower activity toward lysolipids of sphingolipid and isoprenoid phosphates. This Rattus norvegicus (Rat) protein is Bifunctional epoxide hydrolase 2.